We begin with the raw amino-acid sequence, 66 residues long: Large ribosomal subunit protein uL29 (66 aa).

It belongs to the universal ribosomal protein uL29 family.

The polypeptide is Large ribosomal subunit protein uL29 (Rhizobium leguminosarum bv. trifolii (strain WSM2304)).